The primary structure comprises 290 residues: MSQFNVLNRYLFTDAHARGELVQLSSSFESIIKNHNYPVGVEKLLGELLCATCLLTATLKFEGDITVQLQGDGPVGYMSVSGNNKQQMRGIAKMAEETSADTLQTLIGKGTMIITIRPNAGEAYQGVVALDEESLADCLAHYFDVSEQIPTKIWLFCDTEQQLAAGALVQLLPDGDGSTENKEQQQSDFEHLCQLTNTIKSEEVFSLEAEALLYRLYHQEQVNIFEPQMVSYLCGCSADKCLSAISQIEPSEIKAILAEHGKISMTCDYCITTYDFDELSLKSFISKVNH.

Disulfide bonds link Cys234/Cys236 and Cys267/Cys270.

The protein belongs to the HSP33 family. Post-translationally, under oxidizing conditions two disulfide bonds are formed involving the reactive cysteines. Under reducing conditions zinc is bound to the reactive cysteines and the protein is inactive.

The protein resides in the cytoplasm. Its function is as follows. Redox regulated molecular chaperone. Protects both thermally unfolding and oxidatively damaged proteins from irreversible aggregation. Plays an important role in the bacterial defense system toward oxidative stress. This is 33 kDa chaperonin from Colwellia psychrerythraea (strain 34H / ATCC BAA-681) (Vibrio psychroerythus).